Reading from the N-terminus, the 205-residue chain is Bacterial microcompartment protein trimer-1 (205 aa).

The segment at 1 to 20 (MDHAPERFDATPPAGEPDRP) is disordered. BMC domains follow at residues 21-106 (ALGV…RFLD) and 120-204 (SVII…GRLF).

It belongs to the bacterial microcompartments protein family. As to quaternary structure, homotrimerizes to form a pseudohexamer. Unlike its paralogs BMC-T2 and BMC-T3, the pseudohexamers do not stack. The concave side faces outward, with the N- and C-terminii exposed to the cytoplasm.

The protein resides in the bacterial microcompartment. In terms of biological role, a minor component of the bacterial microcompartment (BMC) shell. Expression of 5 proteins in E.coli (BMC-H (Hoch_5815), BMC-P (Hoch_5814), and 3 BMC-T (Hoch_5812, Hoch_5816, Hoch_3341)) forms 40 nm artificial BMCs with a molecular mass of 6.5 MDa. This protein does not form stacked pseudohexamers in the BMC. There are 20 BMC-T pseudohexamers per BMC, composed of mixed BMC-T1, BMC-T2 and BMC-T3. The shell facets are 20-30 Angstroms thick, with 1 of BMC-T trimers protruding to the exterior. The sequence is that of Bacterial microcompartment protein trimer-1 from Haliangium ochraceum (strain DSM 14365 / JCM 11303 / SMP-2).